Consider the following 344-residue polypeptide: L-rhamnose-proton symporter (344 aa).

The next 10 membrane-spanning stretches (helical) occupy residues alanine 4 to alanine 24, tryptophan 38 to leucine 58, phenylalanine 68 to isoleucine 88, methionine 101 to leucine 121, threonine 137 to leucine 157, leucine 175 to alanine 195, isoleucine 207 to isoleucine 227, isoleucine 259 to glycine 279, methionine 290 to leucine 310, and valine 321 to glycine 341.

This sequence belongs to the L-rhamnose transporter (TC 2.A.7.6) family.

Its subcellular location is the cell inner membrane. The enzyme catalyses L-rhamnopyranose(in) + H(+)(in) = L-rhamnopyranose(out) + H(+)(out). In terms of biological role, uptake of L-rhamnose across the cytoplasmic membrane with the concomitant transport of protons into the cell (symport system). In Yersinia pseudotuberculosis serotype O:1b (strain IP 31758), this protein is L-rhamnose-proton symporter.